Here is a 398-residue protein sequence, read N- to C-terminus: Serpin-Z2A (398 aa).

The tract at residues 343–367 is RCL; it reads GTEAAAATIAKAVLLSASPPSDMDF.

Belongs to the serpin family.

Functionally, inhibits chymotrypsin and cathepsin G in vitro. This is Serpin-Z2A from Triticum aestivum (Wheat).